The following is a 513-amino-acid chain: Noroxomaritidine synthase 2 (513 aa).

The chain crosses the membrane as a helical span at residues 14-34; that stretch reads HYPEILIAIACFLIFSLLLSA. Residue Cys458 coordinates heme.

It belongs to the cytochrome P450 family. It depends on heme as a cofactor. As to expression, mostly expressed in stems, and, to a lower extent, in bulbs, roots, leaves and flowers.

It localises to the membrane. The catalysed reaction is 4'-O-methylnorbelladine + reduced [NADPH--hemoprotein reductase] + O2 = (10bR,4aS)-noroxomaritidine + oxidized [NADPH--hemoprotein reductase] + 2 H2O + H(+). It catalyses the reaction 4'-O-methylnorbelladine + reduced [NADPH--hemoprotein reductase] + O2 = (10bS,4aR)-noroxomaritidine + oxidized [NADPH--hemoprotein reductase] + 2 H2O + H(+). It participates in alkaloid biosynthesis. Its function is as follows. Cytochrome P450 that catalyzes an intramolecular para-para' C-C phenol coupling of 4'-O-methylnorbelladine in alkaloids biosynthesis, including haemanthamine- and crinamine-type alkaloids, promising anticancer agents. Catalyzes the formation of (10bR,4aS)-noroxomaritidine and (10bS,4aR)-noroxomaritidine from 4'-O-methylnorbelladine. This is Noroxomaritidine synthase 2 from Narcissus pseudonarcissus (Daffodil).